Here is a 1145-residue protein sequence, read N- to C-terminus: Error-prone DNA polymerase (1145 aa).

Belongs to the DNA polymerase type-C family. DnaE2 subfamily.

The protein resides in the cytoplasm. It carries out the reaction DNA(n) + a 2'-deoxyribonucleoside 5'-triphosphate = DNA(n+1) + diphosphate. Its function is as follows. DNA polymerase involved in damage-induced mutagenesis and translesion synthesis (TLS). It is not the major replicative DNA polymerase. The chain is Error-prone DNA polymerase from Rhodopirellula baltica (strain DSM 10527 / NCIMB 13988 / SH1).